The following is a 472-amino-acid chain: Methanethiol oxidase (472 aa).

This sequence belongs to the selenium-binding protein family.

It is found in the nucleus. It localises to the cytoplasm. The protein localises to the cytosol. The protein resides in the membrane. It carries out the reaction methanethiol + O2 + H2O = hydrogen sulfide + formaldehyde + H2O2 + H(+). It functions in the pathway organosulfur degradation. Functionally, catalyzes the oxidation of methanethiol, an organosulfur compound known to be produced in substantial amounts by gut bacteria. Selenium-binding protein which may be involved in the sensing of reactive xenobiotics in the cytoplasm. May be involved in intra-Golgi protein transport. In Xenopus tropicalis (Western clawed frog), this protein is Methanethiol oxidase (selenbp1).